Here is a 176-residue protein sequence, read N- to C-terminus: dCTP deaminase (176 aa).

DCTP-binding positions include 102 to 107 (RSTFAR) and D118. E128 (proton donor/acceptor) is an active-site residue. DCTP is bound by residues Y160, K166, and Q167.

This sequence belongs to the dCTP deaminase family. In terms of assembly, homotrimer.

The enzyme catalyses dCTP + H2O + H(+) = dUTP + NH4(+). Its pathway is pyrimidine metabolism; dUMP biosynthesis; dUMP from dCTP (dUTP route): step 1/2. Functionally, catalyzes the deamination of dCTP to dUTP. This Staphylothermus marinus (strain ATCC 43588 / DSM 3639 / JCM 9404 / F1) protein is dCTP deaminase.